The following is a 674-amino-acid chain: Probable DNA helicase MCM9 (674 aa).

The C4-type zinc finger occupies 165 to 198 (CRKCKCRFTVHPELEAGNRITLPASCKSKSAKGC). The 204-residue stretch at 318 to 521 (GRNSILKGIC…KWDKIVSSHI (204 aa)) folds into the MCM domain. 368-375 (GDPGTGKS) contributes to the ATP binding site. The Arginine finger signature appears at 497 to 500 (SRFD).

The protein belongs to the MCM family.

It is found in the nucleus. The enzyme catalyses ATP + H2O = ADP + phosphate + H(+). Probable DNA helicase that may play a role in DNA repair during meiosis. The polypeptide is Probable DNA helicase MCM9 (MCM9) (Oryza sativa subsp. indica (Rice)).